The sequence spans 297 residues: uncharacterized protein (297 aa).

The segment at 1–44 (MQKSKSIFIPKAFAPQQQAQAPPSKLDNKDPSVEGEGASKPKDD) is disordered. A compositionally biased stretch (low complexity) spans 10 to 23 (PKAFAPQQQAQAPP). Residues 26–44 (LDNKDPSVEGEGASKPKDD) are compositionally biased toward basic and acidic residues.

This is an uncharacterized protein from Invertebrate iridescent virus 3 (IIV-3).